We begin with the raw amino-acid sequence, 62 residues long: Large ribosomal subunit protein bL28 (62 aa).

The protein belongs to the bacterial ribosomal protein bL28 family.

This chain is Large ribosomal subunit protein bL28, found in Carboxydothermus hydrogenoformans (strain ATCC BAA-161 / DSM 6008 / Z-2901).